Consider the following 101-residue polypeptide: Urease subunit gamma (101 aa).

Belongs to the urease gamma subunit family. Heterotrimer of UreA (gamma), UreB (beta) and UreC (alpha) subunits. Three heterotrimers associate to form the active enzyme.

The protein resides in the cytoplasm. It carries out the reaction urea + 2 H2O + H(+) = hydrogencarbonate + 2 NH4(+). Its pathway is nitrogen metabolism; urea degradation; CO(2) and NH(3) from urea (urease route): step 1/1. The protein is Urease subunit gamma of Corynebacterium kroppenstedtii (strain DSM 44385 / JCM 11950 / CIP 105744 / CCUG 35717).